Here is a 101-residue protein sequence, read N- to C-terminus: Large ribosomal subunit protein uL24 (101 aa).

The protein belongs to the universal ribosomal protein uL24 family. In terms of assembly, part of the 50S ribosomal subunit.

Functionally, one of two assembly initiator proteins, it binds directly to the 5'-end of the 23S rRNA, where it nucleates assembly of the 50S subunit. Its function is as follows. One of the proteins that surrounds the polypeptide exit tunnel on the outside of the subunit. The chain is Large ribosomal subunit protein uL24 from Lactococcus lactis subsp. lactis (strain IL1403) (Streptococcus lactis).